We begin with the raw amino-acid sequence, 479 residues long: Alpha,alpha-trehalose-phosphate synthase [UDP-forming] 2 (479 aa).

D-glucose 6-phosphate is bound by residues Y96 and D150. Residues R287 and K292 each contribute to the UDP site. Residues R287 and K292 each coordinate UDP-alpha-D-glucose. R325 serves as a coordination point for D-glucose 6-phosphate. Residues 363-364 and 390-394 each bind UDP; these read SV and LVSFE. UDP-alpha-D-glucose is bound at residue 386–394; that stretch reads DGMNLVSFE.

The protein belongs to the glycosyltransferase 20 family.

The catalysed reaction is D-glucose 6-phosphate + UDP-alpha-D-glucose = alpha,alpha-trehalose 6-phosphate + UDP + H(+). It participates in carbohydrate biosynthesis. Its function is as follows. Synthase catalytic subunit of the trehalose synthase complex that catalyzes the production of trehalose from glucose-6-phosphate and UDP-alpha-D-glucose in a two step process. The disaccharide trehalose serves as a storage carbohydrate that is mobilized during conidial germination. Regulates the level of trehalose as a protectant for cell integrity during thermal and oxidative stress. This is Alpha,alpha-trehalose-phosphate synthase [UDP-forming] 2 from Aspergillus fumigatus (strain ATCC MYA-4609 / CBS 101355 / FGSC A1100 / Af293) (Neosartorya fumigata).